A 405-amino-acid chain; its full sequence is Envelope glycoprotein G (405 aa).

Positions 1–19 (MLAVGATLCLLSFLTGATG) are cleaved as a signal peptide. N-linked (GlcNAc...) asparagine; by host glycosylation is found at Asn-83, Asn-138, Asn-174, Asn-221, and Asn-288. Residues 389 to 405 (LKTVYICLALIGLAHVP) traverse the membrane as a helical segment.

It belongs to the alphaherpesvirinae glycoprotein G family.

It localises to the virion membrane. Functionally, chemokine-binding protein that inhibits neutrophils' chemotaxis. This chain is Envelope glycoprotein G (gG), found in Equine herpesvirus 4 (strain 1942) (EHV-4).